We begin with the raw amino-acid sequence, 412 residues long: Gamma-glutamyl phosphate reductase (412 aa).

The protein belongs to the gamma-glutamyl phosphate reductase family.

The protein resides in the cytoplasm. It carries out the reaction L-glutamate 5-semialdehyde + phosphate + NADP(+) = L-glutamyl 5-phosphate + NADPH + H(+). It participates in amino-acid biosynthesis; L-proline biosynthesis; L-glutamate 5-semialdehyde from L-glutamate: step 2/2. Its function is as follows. Catalyzes the NADPH-dependent reduction of L-glutamate 5-phosphate into L-glutamate 5-semialdehyde and phosphate. The product spontaneously undergoes cyclization to form 1-pyrroline-5-carboxylate. This is Gamma-glutamyl phosphate reductase from Actinobacillus pleuropneumoniae serotype 7 (strain AP76).